The chain runs to 426 residues: Enolase (426 aa).

Glutamine 165 contributes to the (2R)-2-phosphoglycerate binding site. Residue glutamate 209 is the Proton donor of the active site. Mg(2+) is bound by residues aspartate 244, glutamate 287, and aspartate 313. The (2R)-2-phosphoglycerate site is built by lysine 338, arginine 367, serine 368, and lysine 389. Lysine 338 serves as the catalytic Proton acceptor.

This sequence belongs to the enolase family. Requires Mg(2+) as cofactor.

It is found in the cytoplasm. The protein resides in the secreted. Its subcellular location is the cell surface. The enzyme catalyses (2R)-2-phosphoglycerate = phosphoenolpyruvate + H2O. It functions in the pathway carbohydrate degradation; glycolysis; pyruvate from D-glyceraldehyde 3-phosphate: step 4/5. In terms of biological role, catalyzes the reversible conversion of 2-phosphoglycerate (2-PG) into phosphoenolpyruvate (PEP). It is essential for the degradation of carbohydrates via glycolysis. The polypeptide is Enolase (Methanococcus maripaludis (strain C7 / ATCC BAA-1331)).